The primary structure comprises 806 residues: Transitional endoplasmic reticulum ATPase (806 aa).

At serine 3 the chain carries Phosphoserine. ATP is bound by residues 247 to 253, asparagine 348, histidine 384, and 521 to 526; these read PGTGKTL and GCGKTL. Disordered stretches follow at residues 708–727 and 768–806; these read RRERERQTNPSAMEVEEDDP and FGSFRFPSSNQGGSGPSQGSSGGGGGNVFNEDNDDDLYG. The segment covering 768–778 has biased composition (low complexity); it reads FGSFRFPSSNQ. Over residues 779–794 the composition is skewed to gly residues; that stretch reads GGSGPSQGSSGGGGGN.

The protein belongs to the AAA ATPase family. Homohexamer.

It is found in the cytoplasm. Its subcellular location is the cytosol. The protein localises to the endoplasmic reticulum. The protein resides in the nucleus. It catalyses the reaction ATP + H2O = ADP + phosphate + H(+). Its function is as follows. Necessary for the fragmentation of Golgi stacks during mitosis and for their reassembly after mitosis. Involved in the formation of the nuclear envelope, and of the transitional endoplasmic reticulum (tER). The transfer of membranes from the endoplasmic reticulum to the Golgi apparatus occurs via 50-70 nm transition vesicles which derive from part-rough, part-smooth transitional elements of the endoplasmic reticulum (tER). Vesicle budding from the tER is an ATP-dependent process. Also involved in DNA damage response: recruited to double-strand breaks (DSBs) sites and promotes the recruitment of tp53bp1 at DNA damage sites. Together with sprtn metalloprotease, involved in the repair of covalent DNA-protein cross-links (DPCs) during DNA synthesis. Involved in interstrand cross-link repair in response to replication stress by mediating unloading of the ubiquitinated CMG helicase complex. Enhances cell cycle progression and inhibits apoptosis at low temperatures. Essential for the maturation of ubiquitin-containing autophagosomes and the clearance of ubiquitinated protein by autophagy. Acts as a negative regulator of type I interferon production by promoting ubiquitination of RIGI. May play a role in the ubiquitin-dependent sorting of membrane proteins to lysosomes where they undergo degradation. May more particularly play a role in caveolins sorting in cells. By controlling the steady-state expression of the IGF1R receptor, indirectly regulates the insulin-like growth factor receptor signaling pathway. In Danio rerio (Zebrafish), this protein is Transitional endoplasmic reticulum ATPase.